The sequence spans 96 residues: Cytoplasmic envelopment protein 3 (96 aa).

Gly-2 carries N-myristoyl glycine; by host lipidation. Positions 18 to 19 (LI) match the Di-leucine-like internalization motif motif. Positions 37-43 (DIESEEE) are asp/Glu-rich (acidic). Phosphoserine is present on Ser-40. The interval 44–96 (GNFYVPPDMRGVTRAPGRQRLRSSDPPSRHTHRRTPGGACPATQFPPPMSDSE) is disordered. Residues 87 to 96 (QFPPPMSDSE) show a composition bias toward pro residues.

It belongs to the herpesviridae cytoplasmic envelopment protein 3 family. Interacts with cytoplasmic envelopment protein 2; this interaction is essential for the proper localization of each protein to the assembly complex and thus for the production of infectious virus. Interacts with gE (via C-terminus). Interacts with gD (via C-terminus). Interacts with UL56. Post-translationally, myristoylation and palmitoylation (probably on one or more of the nearby cysteines at the N-terminus) enable membrane-binding and Golgi apparatus-specific targeting and are essential for efficient packaging. In terms of processing, phosphorylated. Phosphorylation does not seem to be required for recycling to the host Golgi apparatus. Packaging is selective for underphosphorylated forms.

It localises to the virion tegument. Its subcellular location is the virion membrane. The protein localises to the host cell membrane. The protein resides in the host Golgi apparatus membrane. Functionally, plays an important role in the cytoplasmic envelopment of tegument proteins and capsids during the assembly and egress processes. Also participates in viral entry at the fusion step probably by regulating the core fusion machinery. This Homo sapiens (Human) protein is Cytoplasmic envelopment protein 3.